The sequence spans 158 residues: Adenosine 5'-monophosphoramidase HNT1 (158 aa).

In terms of domain architecture, HIT spans 26–129 (IFCKIIKSEI…IPKRDEKSGL (104 aa)). Residues 51–52 (DI), Asn-103, 109–111 (HQE), and 116–118 (HFH) each bind AMP. The Histidine triad motif signature appears at 114–118 (HVHFH). His-116 acts as the Tele-AMP-histidine intermediate in catalysis.

The protein belongs to the HINT family. Homodimer. Interacts with KIN28. Requires Mg(2+) as cofactor.

It catalyses the reaction adenosine 5'-phosphoramidate + H2O = AMP + NH4(+). Hydrolyzes adenosine 5'-monophosphoramidate substrates such as AMP-morpholidate, AMP-N-alanine methyl ester, AMP-alpha-acetyl lysine methyl ester and AMP-NH2. Plays a role in the regulation of kinase KIN28 function. Essential for growth on galactose media at elevated temperatures. This Saccharomyces cerevisiae (strain ATCC 204508 / S288c) (Baker's yeast) protein is Adenosine 5'-monophosphoramidase HNT1.